The chain runs to 394 residues: 1-deoxy-D-xylulose 5-phosphate reductoisomerase (394 aa).

Residues threonine 12, glycine 13, serine 14, isoleucine 15, lysine 39, glutamine 40, and asparagine 126 each coordinate NADPH. Lysine 127 lines the 1-deoxy-D-xylulose 5-phosphate pocket. An NADPH-binding site is contributed by glutamate 128. Aspartate 152 is a binding site for Mn(2+). Positions 153, 154, 183, and 206 each coordinate 1-deoxy-D-xylulose 5-phosphate. Position 154 (glutamate 154) interacts with Mn(2+). An NADPH-binding site is contributed by glycine 212. 4 residues coordinate 1-deoxy-D-xylulose 5-phosphate: serine 219, asparagine 224, lysine 225, and glutamate 228. Position 228 (glutamate 228) interacts with Mn(2+).

The protein belongs to the DXR family. Mg(2+) serves as cofactor. It depends on Mn(2+) as a cofactor.

It carries out the reaction 2-C-methyl-D-erythritol 4-phosphate + NADP(+) = 1-deoxy-D-xylulose 5-phosphate + NADPH + H(+). Its pathway is isoprenoid biosynthesis; isopentenyl diphosphate biosynthesis via DXP pathway; isopentenyl diphosphate from 1-deoxy-D-xylulose 5-phosphate: step 1/6. Its function is as follows. Catalyzes the NADPH-dependent rearrangement and reduction of 1-deoxy-D-xylulose-5-phosphate (DXP) to 2-C-methyl-D-erythritol 4-phosphate (MEP). The chain is 1-deoxy-D-xylulose 5-phosphate reductoisomerase from Neisseria gonorrhoeae (strain ATCC 700825 / FA 1090).